Reading from the N-terminus, the 557-residue chain is Dihydroxy-acid dehydratase (557 aa).

Asp78 is a binding site for Mg(2+). Residue Cys119 participates in [2Fe-2S] cluster binding. Mg(2+) is bound by residues Asp120 and Lys121. Position 121 is an N6-carboxylysine (Lys121). A [2Fe-2S] cluster-binding site is contributed by Cys192. Glu442 is a Mg(2+) binding site. The Proton acceptor role is filled by Ser468.

This sequence belongs to the IlvD/Edd family. Homodimer. Requires [2Fe-2S] cluster as cofactor. It depends on Mg(2+) as a cofactor.

The enzyme catalyses (2R)-2,3-dihydroxy-3-methylbutanoate = 3-methyl-2-oxobutanoate + H2O. The catalysed reaction is (2R,3R)-2,3-dihydroxy-3-methylpentanoate = (S)-3-methyl-2-oxopentanoate + H2O. It functions in the pathway amino-acid biosynthesis; L-isoleucine biosynthesis; L-isoleucine from 2-oxobutanoate: step 3/4. The protein operates within amino-acid biosynthesis; L-valine biosynthesis; L-valine from pyruvate: step 3/4. Functions in the biosynthesis of branched-chain amino acids. Catalyzes the dehydration of (2R,3R)-2,3-dihydroxy-3-methylpentanoate (2,3-dihydroxy-3-methylvalerate) into 2-oxo-3-methylpentanoate (2-oxo-3-methylvalerate) and of (2R)-2,3-dihydroxy-3-methylbutanoate (2,3-dihydroxyisovalerate) into 2-oxo-3-methylbutanoate (2-oxoisovalerate), the penultimate precursor to L-isoleucine and L-valine, respectively. The chain is Dihydroxy-acid dehydratase from Bacillus thuringiensis subsp. konkukian (strain 97-27).